The chain runs to 245 residues: Small ribosomal subunit protein uS2 (245 aa).

Belongs to the universal ribosomal protein uS2 family.

This Pseudomonas fluorescens (strain ATCC BAA-477 / NRRL B-23932 / Pf-5) protein is Small ribosomal subunit protein uS2.